Reading from the N-terminus, the 276-residue chain is NH(3)-dependent NAD(+) synthetase (276 aa).

46 to 53 (GISGGQDS) contributes to the ATP binding site. Mg(2+) is bound at residue Asp-52. Arg-140 provides a ligand contact to deamido-NAD(+). Position 160 (Thr-160) interacts with ATP. Glu-165 is a Mg(2+) binding site. Deamido-NAD(+)-binding residues include Lys-173 and Asp-180. Residues Lys-189 and Thr-211 each contribute to the ATP site. Residue 260–261 (HK) participates in deamido-NAD(+) binding.

The protein belongs to the NAD synthetase family. Homodimer.

The catalysed reaction is deamido-NAD(+) + NH4(+) + ATP = AMP + diphosphate + NAD(+) + H(+). It participates in cofactor biosynthesis; NAD(+) biosynthesis; NAD(+) from deamido-NAD(+) (ammonia route): step 1/1. Catalyzes the ATP-dependent amidation of deamido-NAD to form NAD. Uses ammonia as a nitrogen source. In Citrobacter koseri (strain ATCC BAA-895 / CDC 4225-83 / SGSC4696), this protein is NH(3)-dependent NAD(+) synthetase.